The following is an 862-amino-acid chain: Probable disease resistance protein At5g43740 (862 aa).

Positions 24–61 form a coiled coil; that stretch reads RNYIHMMESNLDALQKTMEELKNGRDDLLGRVSIEEDK. The NB-ARC domain occupies 135–438; it reads MVAQEIIHKV…CEGFINPNRY (304 aa). An ATP-binding site is contributed by 178-185; that stretch reads GMGGVGKT. LRR repeat units follow at residues 511–532, 533–555, 558–580, and 582–604; these read IVRT…SKCP, NLST…FFRF, KLVV…ISNL, and SLQY…KKLR.

It belongs to the disease resistance NB-LRR family.

In terms of biological role, probable disease resistance protein. This is Probable disease resistance protein At5g43740 from Arabidopsis thaliana (Mouse-ear cress).